A 419-amino-acid polypeptide reads, in one-letter code: Voltage-gated potassium channel subunit beta-1 (419 aa).

A disordered region spans residues 1-51 (MLAARTGAAGSQIAEESSKLRKQAAFSGGSKDRSPKKASENVKDSSLSPSG). Residues 30–43 (SKDRSPKKASENVK) show a composition bias toward basic and acidic residues. 4 residues coordinate NADP(+): threonine 108, tryptophan 109, glutamine 115, and aspartate 137. Tyrosine 142 acts as the Proton donor/acceptor in catalysis. The NADP(+) site is built by asparagine 210, serine 240, arginine 241, glutamine 266, tryptophan 295, serine 296, proline 297, leucine 298, alanine 299, cysteine 300, lysine 306, arginine 316, glycine 375, serine 377, glutamine 381, glutamate 384, and asparagine 385.

The protein belongs to the shaker potassium channel beta subunit family. Homotetramer. Interaction with tetrameric potassium channel alpha subunits gives rise to a heterooctamer. Identified in potassium channel complexes containing KCNA1, KCNA2, KCNA4, KCNA5, KCNA6, KCNAB1 and KCNAB2. Part of a complex containing KCNA1, KCNA4 and LGI1; interaction with LGI1 inhibits down-regulation of KCNA1 channel activity. Interacts with the dimer formed by GNB1 and GNG2; this enhances KCNA1 binding. Interacts with SQSTM1. As to expression, detected in portal vein myocytes (at protein level).

Its subcellular location is the cytoplasm. It localises to the membrane. It is found in the cell membrane. The catalysed reaction is a primary alcohol + NADP(+) = an aldehyde + NADPH + H(+). The enzyme catalyses a secondary alcohol + NADP(+) = a ketone + NADPH + H(+). Its function is as follows. Regulatory subunit of the voltage-gated potassium (Kv) channels composed of pore-forming and potassium-conducting alpha subunits and of regulatory beta subunits. The beta-1/KCNAB1 cytoplasmic subunit mediates closure of delayed rectifier potassium channels by physically obstructing the pore via its N-terminal domain and increases the speed of channel closure for other family members. Promotes the inactivation of KCNA1, KCNA2, KCNA4, KCNA5 and KCNA6 alpha subunit-containing channels. Displays nicotinamide adenine dinucleotide phosphate (NADPH)-dependent aldoketoreductase activity by catalyzing the NADPH-dependent reduction of a variety of endogenous aldehydes and ketones. The binding of NADPH is required for efficient down-regulation of potassium channel activity. Oxidation of the bound NADPH restrains N-terminal domain from blocking the channel, thereby decreasing N-type inactivation of potassium channel activity. The chain is Voltage-gated potassium channel subunit beta-1 (KCNAB1) from Oryctolagus cuniculus (Rabbit).